The chain runs to 151 residues: UPF0178 protein Spea_2958 (151 aa).

Belongs to the UPF0178 family.

The chain is UPF0178 protein Spea_2958 from Shewanella pealeana (strain ATCC 700345 / ANG-SQ1).